The sequence spans 1068 residues: Disheveled-associated activator of morphogenesis 2 (1068 aa).

The region spanning 40 to 416 (SPIPNAEELN…QIVLQDERGV (377 aa)) is the GBD/FH3 domain. Residues 434-516 (MLINENEVKQ…LVAQLSELST (83 aa)) are a coiled coil. The segment at 514–586 (LSTGPVSSPP…MGLPLPQDPY (73 aa)) is disordered. The 77-residue stretch at 518 to 594 (PVSSPPPPGG…PYPSSDVPLR (77 aa)) folds into the FH1 domain. Over residues 540–572 (LPPPPPPLPFACCPPPPPPPLPPGGPPTPPGAP) the composition is skewed to pro residues. The region spanning 595–994 (KKRVPQPSHP…EERRARMEAM (400 aa)) is the FH2 domain. A Phosphoserine modification is found at Ser-1015. In terms of domain architecture, DAD spans 1016–1048 (SLEEGGEFDDLVSALRSGEVFDKDLCKLKRSRK).

It belongs to the formin homology family. Interacts with DVL3. Interacts with INF2. As to expression, expressed in most tissues examined. Expressed in kidney glomeruli.

In terms of biological role, key regulator of the Wnt signaling pathway, which is required for various processes during development, such as dorsal patterning, determination of left/right symmetry or myelination in the central nervous system. Acts downstream of Wnt ligands and upstream of beta-catenin (CTNNB1). Required for canonical Wnt signaling pathway during patterning in the dorsal spinal cord by promoting the aggregation of Disheveled (Dvl) complexes, thereby clustering and formation of Wnt receptor signalosomes and potentiating Wnt activity. During dorsal patterning of the spinal cord, inhibits oligodendrocytes differentiation via interaction with PIP5K1A. Also regulates non-canonical Wnt signaling pathway. Acts downstream of PITX2 in the developing gut and is required for left/right asymmetry within dorsal mesentery: affects mesenchymal condensation by lengthening cadherin-based junctions through WNT5A and non-canonical Wnt signaling, inducing polarized condensation in the left dorsal mesentery necessary to initiate gut rotation. Together with DAAM1, required for myocardial maturation and sarcomere assembly. Is a regulator of actin nucleation and elongation, filopodia formation and podocyte migration. The chain is Disheveled-associated activator of morphogenesis 2 from Homo sapiens (Human).